The following is a 384-amino-acid chain: Neuropeptide Y receptor type 2 (384 aa).

Residues 1–54 (MKMGPLGAEADENQTVEEMKVDQFGPGHTTLPGELAPDSEPELIDSTKLIEVQV) are Extracellular-facing. Asn13 carries an N-linked (GlcNAc...) asparagine glycan. The helical transmembrane segment at 55–75 (VLILAYCSIILLGVIGNSLVI) threads the bilayer. The Cytoplasmic portion of the chain corresponds to 76–89 (HVVIKFKSMRTVTN). Residues 90-110 (FFIANLAVADLLVNTLCLPFT) traverse the membrane as a helical segment. Over 111–127 (LTYTLMGEWKMGPVLCH) the chain is Extracellular. The cysteines at positions 126 and 206 are disulfide-linked. A helical transmembrane segment spans residues 128–148 (LVPYAQGLAVQVSTITLTVIA). Residues 149–168 (LDRHRCIVYHLESKISKQIS) are Cytoplasmic-facing. The chain crosses the membrane as a helical span at residues 169 to 189 (FLIIGLAWGVSALLASPLAIF). At 190 to 219 (REYSLIEIIPDFEIVACTEKWPGEEKGIYG) the chain is on the extracellular side. The helical transmembrane segment at 220–240 (TIYSLSSLLILYVLPLGIISF) threads the bilayer. At 241–271 (SYTRIWSKLKNHVSPGAAHDHYHQRRQKTTK) the chain is on the cytoplasmic side. A helical membrane pass occupies residues 272-292 (MLVCVVVVFAVSWLPLHAFQL). The Extracellular segment spans residues 293-307 (AVDIDSHVLDLKEYK). The helical transmembrane segment at 308–328 (LIFTVFHIIAMCSTFANPLLY) threads the bilayer. The Cytoplasmic portion of the chain corresponds to 329 to 384 (GWMNSNYRKAFLSAFRCEQRLDAIHSEVSVTFKAKKHLQVTKNNGPNDSFTETTNV). Residue Cys345 is the site of S-palmitoyl cysteine attachment.

Belongs to the G-protein coupled receptor 1 family.

The protein localises to the cell membrane. In terms of biological role, receptor for neuropeptide Y and peptide YY. The chain is Neuropeptide Y receptor type 2 (NPY2R) from Bos taurus (Bovine).